We begin with the raw amino-acid sequence, 213 residues long: Nucleolar protein 12 (213 aa).

The stretch at 32 to 95 (GFHKRKVERK…RLVTAKTESV (64 aa)) forms a coiled coil. The interval 117–213 (ARLLGLPTPE…LTGKARHSGE (97 aa)) is disordered. 2 stretches are compositionally biased toward basic residues: residues 169-181 (AHSR…KRLR) and 197-213 (SKTR…HSGE).

It belongs to the RRP17 family. As to quaternary structure, interacts with KIAA1191.

The protein resides in the nucleus. It localises to the nucleolus. It is found in the cytoplasm. In terms of biological role, multifunctional RNA binding protein that plays a role in RNA metabolism and DNA maintenance. Participates in the resolution of DNA stress and the maintenance of genome integrity by localizing to sites of DNA insults. Also plays a role in proper nucleolar organization by limiting nucleolar size and regulating nucleolar number. Mechanistically, regulates the nucleolar levels of fibrillarin and nucleolin, two key players in pre-rRNA processing and ribosome assembly. The chain is Nucleolar protein 12 (NOL12) from Bos taurus (Bovine).